The primary structure comprises 1100 residues: DNA-directed RNA polymerase subunit beta (1100 aa).

Residues 1064–1100 (YEEDKEVDLMADVNQRRTPSRPTYESMSVGDIDDDDD) form a disordered region. A compositionally biased stretch (polar residues) spans 1079 to 1089 (RRTPSRPTYES).

Belongs to the RNA polymerase beta chain family. In terms of assembly, in cyanobacteria the RNAP catalytic core is composed of 2 alpha, 1 beta, 1 beta', 1 gamma and 1 omega subunit. When a sigma factor is associated with the core the holoenzyme is formed, which can initiate transcription.

It catalyses the reaction RNA(n) + a ribonucleoside 5'-triphosphate = RNA(n+1) + diphosphate. DNA-dependent RNA polymerase catalyzes the transcription of DNA into RNA using the four ribonucleoside triphosphates as substrates. This is DNA-directed RNA polymerase subunit beta from Synechococcus sp. (strain ATCC 27144 / PCC 6301 / SAUG 1402/1) (Anacystis nidulans).